We begin with the raw amino-acid sequence, 191 residues long: Signal peptidase IB (191 aa).

Residues 1-7 (MKKELLE) are Cytoplasmic-facing. The helical transmembrane segment at 8 to 28 (WIISIAVAFVILFIVGKFIVT) threads the bilayer. Over 29-191 (PYTIKGESMD…YNFNPENTKN (163 aa)) the chain is Extracellular. Catalysis depends on residues Ser-36 and Lys-77.

Belongs to the peptidase S26 family.

The protein localises to the cell membrane. It catalyses the reaction Cleavage of hydrophobic, N-terminal signal or leader sequences from secreted and periplasmic proteins.. In terms of biological role, essential for cell viability. This chain is Signal peptidase IB (spsB), found in Staphylococcus aureus (strain MRSA252).